The primary structure comprises 234 residues: OVARIAN TUMOR DOMAIN-containing deubiquitinating enzyme 3 (234 aa).

Residues 76–234 enclose the OTU domain; that stretch reads YAVDRVKGDG…SGRNHYDLLR (159 aa). Residues 81–87 are cys-loop; that stretch reads VKGDGRC. Asp-84 is an active-site residue. Cys-87 serves as the catalytic Nucleophile. A variable-loop region spans residues 154-164; the sequence is IGRHDFWGGES. The segment at 224 to 229 is his-loop; the sequence is YSGRNH. His-229 is a catalytic residue.

This sequence belongs to the peptidase C85 family.

It catalyses the reaction Thiol-dependent hydrolysis of ester, thioester, amide, peptide and isopeptide bonds formed by the C-terminal Gly of ubiquitin (a 76-residue protein attached to proteins as an intracellular targeting signal).. Functionally, hydrolase that can remove conjugated ubiquitin from proteins in vitro and may therefore play an important regulatory role at the level of protein turnover by preventing degradation. Cysteine protease with a preference for 'Lys-63' over 'Lys-48' over 'Met-1' -linked ubiquitin (UB) tetramers (e.g. Ub3 and Ub4) as substrates. Also cleaves RUB-GST fusion. In Arabidopsis thaliana (Mouse-ear cress), this protein is OVARIAN TUMOR DOMAIN-containing deubiquitinating enzyme 3.